The primary structure comprises 292 residues: Rhodanese-like domain-containing protein 11, chloroplastic (292 aa).

Residues 1–56 (MESLSLPVLNPLLASGSNLFRNQHSRMTSSMVSSLKSPIGGTSLSTVRRFGVGVVR) constitute a chloroplast transit peptide. The region spanning 101 to 224 (SLSNKPLLDV…AQDEDLVTEG (124 aa)) is the Rhodanese domain. Cys-184 acts as the Cysteine persulfide intermediate in catalysis.

It localises to the plastid. The protein localises to the chloroplast. This is Rhodanese-like domain-containing protein 11, chloroplastic (STR11) from Arabidopsis thaliana (Mouse-ear cress).